Here is a 231-residue protein sequence, read N- to C-terminus: Ribosyldihydronicotinamide dehydrogenase [quinone] (231 aa).

FAD is bound by residues His12 and 18–21 (FNGS). Ser80 carries the post-translational modification Phosphoserine. 104–107 (LYWF) contributes to the FAD binding site. Residue 127–129 (FDI) coordinates substrate. FAD is bound by residues 148 to 151 (TTGG) and Tyr156. Residues His174 and His178 each contribute to the Zn(2+) site. Position 194 (Glu194) interacts with FAD. Phosphoserine is present on Ser197. Position 201 (Arg201) interacts with FAD. Cys223 contributes to the Zn(2+) binding site.

Belongs to the NAD(P)H dehydrogenase (quinone) family. Homodimer. Zn(2+) serves as cofactor. Requires FAD as cofactor.

The protein resides in the cytoplasm. The enzyme catalyses 1-(beta-D-ribofuranosyl)-1,4-dihydronicotinamide + a quinone + H(+) = beta-nicotinamide D-riboside + a quinol. In terms of biological role, the enzyme apparently serves as a quinone reductase in connection with conjugation reactions of hydroquinones involved in detoxification pathways as well as in biosynthetic processes such as the vitamin K-dependent gamma-carboxylation of glutamate residues in prothrombin synthesis. The sequence is that of Ribosyldihydronicotinamide dehydrogenase [quinone] (NQO2) from Pongo abelii (Sumatran orangutan).